The following is a 63-amino-acid chain: Cytochrome c oxidase subunit 5A, mitochondrial (63 aa).

The protein belongs to the cytochrome c oxidase subunit 5A family. In terms of assembly, component of the cytochrome c oxidase (complex IV, CIV), a multisubunit enzyme composed of a catalytic core of 3 subunits and several supernumerary subunits. The complex exists as a monomer or a dimer and forms supercomplexes (SCs) in the inner mitochondrial membrane with ubiquinol-cytochrome c oxidoreductase (cytochrome b-c1 complex, complex III, CIII).

The protein resides in the mitochondrion inner membrane. The protein operates within energy metabolism; oxidative phosphorylation. Component of the cytochrome c oxidase, the last enzyme in the mitochondrial electron transport chain which drives oxidative phosphorylation. The respiratory chain contains 3 multisubunit complexes succinate dehydrogenase (complex II, CII), ubiquinol-cytochrome c oxidoreductase (cytochrome b-c1 complex, complex III, CIII) and cytochrome c oxidase (complex IV, CIV), that cooperate to transfer electrons derived from NADH and succinate to molecular oxygen, creating an electrochemical gradient over the inner membrane that drives transmembrane transport and the ATP synthase. Cytochrome c oxidase is the component of the respiratory chain that catalyzes the reduction of oxygen to water. Electrons originating from reduced cytochrome c in the intermembrane space (IMS) are transferred via the dinuclear copper A center (CU(A)) of subunit 2 and heme A of subunit 1 to the active site in subunit 1, a binuclear center (BNC) formed by heme A3 and copper B (CU(B)). The BNC reduces molecular oxygen to 2 water molecules using 4 electrons from cytochrome c in the IMS and 4 protons from the mitochondrial matrix. This Manduca sexta (Tobacco hawkmoth) protein is Cytochrome c oxidase subunit 5A, mitochondrial (COVA).